Here is a 240-residue protein sequence, read N- to C-terminus: Probable transcriptional regulatory protein SO_3401 (240 aa).

Belongs to the TACO1 family.

It localises to the cytoplasm. In Shewanella oneidensis (strain ATCC 700550 / JCM 31522 / CIP 106686 / LMG 19005 / NCIMB 14063 / MR-1), this protein is Probable transcriptional regulatory protein SO_3401.